We begin with the raw amino-acid sequence, 293 residues long: Lipoyl synthase (293 aa).

Residues Cys38, Cys43, Cys49, Cys64, Cys68, Cys71, and Ser277 each contribute to the [4Fe-4S] cluster site. A Radical SAM core domain is found at 50-266 (WSRGTATFLL…STIAKNAGIR (217 aa)).

It belongs to the radical SAM superfamily. Lipoyl synthase family. [4Fe-4S] cluster serves as cofactor.

The protein resides in the cytoplasm. The catalysed reaction is [[Fe-S] cluster scaffold protein carrying a second [4Fe-4S](2+) cluster] + N(6)-octanoyl-L-lysyl-[protein] + 2 oxidized [2Fe-2S]-[ferredoxin] + 2 S-adenosyl-L-methionine + 4 H(+) = [[Fe-S] cluster scaffold protein] + N(6)-[(R)-dihydrolipoyl]-L-lysyl-[protein] + 4 Fe(3+) + 2 hydrogen sulfide + 2 5'-deoxyadenosine + 2 L-methionine + 2 reduced [2Fe-2S]-[ferredoxin]. Its pathway is protein modification; protein lipoylation via endogenous pathway; protein N(6)-(lipoyl)lysine from octanoyl-[acyl-carrier-protein]: step 2/2. Functionally, catalyzes the radical-mediated insertion of two sulfur atoms into the C-6 and C-8 positions of the octanoyl moiety bound to the lipoyl domains of lipoate-dependent enzymes, thereby converting the octanoylated domains into lipoylated derivatives. In Chlorobium chlorochromatii (strain CaD3), this protein is Lipoyl synthase.